A 144-amino-acid chain; its full sequence is Probable disulfide formation protein (144 aa).

Residues 10-29 form a helical membrane-spanning segment; that stretch reads WNLLLLTWLVALISTLSALF. A disulfide bridge links cysteine 39 with cysteine 42. The next 2 membrane-spanning stretches (helical) occupy residues 44–63 and 70–87; these read FQRA…CYRS and YALP…VHTL. A disulfide bridge connects residues cysteine 100 and cysteine 107. Residues 116 to 138 form a helical membrane-spanning segment; the sequence is GVVPLPALALFAFIIIAILLIII.

The protein belongs to the DsbB family. BdbC subfamily.

It is found in the cell inner membrane. Its function is as follows. Required for disulfide bond formation in some proteins. This chain is Probable disulfide formation protein, found in Metapseudomonas resinovorans (Pseudomonas resinovorans).